A 1307-amino-acid chain; its full sequence is Rho1 guanine nucleotide exchange factor TUS1 (1307 aa).

Residues 1-10 (MYRYNRSSPF) are compositionally biased toward polar residues. 3 disordered regions span residues 1–144 (MYRY…FIGN), 164–194 (PFAN…SDLR), and 219–239 (EDSE…NVSG). The span at 12 to 29 (RTPEKRVSRQESQRKSIE) shows a compositional bias: basic and acidic residues. A compositionally biased stretch (polar residues) spans 37–79 (NTRNSFLDDSDNGTDNISIGWTPISDTQQFQSPVPQAFTFTSK). A compositionally biased stretch (low complexity) spans 87-97 (TSSSESTPKST). The span at 176–194 (SPRDSSKQQAHFSDESDLR) shows a compositional bias: basic and acidic residues. The 191-residue stretch at 467–657 (QRQSFIFDLI…EKLNFEVNQV (191 aa)) folds into the DH domain. The 163-residue stretch at 715 to 877 (KLVLSGTVYK…WIDAIMESFK (163 aa)) folds into the PH domain. Positions 780–802 (TSKQPLRNYSQKEHKSPMHNFST) are disordered. Residues 938–1279 (TTRILCCEDV…KLASSERREK (342 aa)) form the CNH domain.

In terms of assembly, interacts with RHO1.

Guanine nucleotide-exchange factor (GEF) for RHO1 that stimulates the exchange of RHO1 GDP-bound form into GTP-bound form. Required for signaling of cell wall defects to RHO1. The protein is Rho1 guanine nucleotide exchange factor TUS1 (TUS1) of Saccharomyces cerevisiae (strain ATCC 204508 / S288c) (Baker's yeast).